The sequence spans 718 residues: Serine/threonine-protein kinase PAK 5 (718 aa).

Disordered stretches follow at residues 1-29, 96-119, 226-245, 264-296, and 339-371; these read MFGK…DPQE, RSNS…IQGH, SPLD…TSRC, YDRR…QEPM, and VFSP…SSSH. In terms of domain architecture, CRIB spans 11-24; that stretch reads ISGPSNFEHRVHTG. The tract at residues 25–447 is linker; that stretch reads FDPQEQKFTG…VVSPGDPREY (423 aa). Ser104 carries the phosphoserine modification. Thr107 is modified (phosphothreonine). The span at 226-244 shows a compositional bias: polar residues; sequence SPLDYSFQLTPSRTAGTSR. The segment covering 359–371 has biased composition (low complexity); it reads QSQSKVGYSSSSH. The Protein kinase domain occupies 448 to 699; that stretch reads LDNFIKIGEG…AQELLGHPFL (252 aa). Residues 454-462 and Lys477 each bind ATP; that span reads IGEGSTGIV. Asp567 functions as the Proton acceptor in the catalytic mechanism.

Belongs to the protein kinase superfamily. STE Ser/Thr protein kinase family. STE20 subfamily. As to quaternary structure, interacts tightly with GTP-bound but not GDP-bound CDC42/p21 and RAC1. Interacts with MARK2, leading to inhibit MARK2 independently of kinase activity. Interacts with RHOD and RHOH. In terms of processing, autophosphorylated when activated by CDC42/p21.

The protein localises to the mitochondrion. It localises to the cytoplasm. The protein resides in the nucleus. The catalysed reaction is L-seryl-[protein] + ATP = O-phospho-L-seryl-[protein] + ADP + H(+). It catalyses the reaction L-threonyl-[protein] + ATP = O-phospho-L-threonyl-[protein] + ADP + H(+). Its function is as follows. Serine/threonine protein kinase that plays a role in a variety of different signaling pathways including cytoskeleton regulation, cell migration, proliferation or cell survival. Activation by various effectors including growth factor receptors or active CDC42 and RAC1 results in a conformational change and a subsequent autophosphorylation on several serine and/or threonine residues. Phosphorylates the proto-oncogene RAF and stimulates its kinase activity. Promotes cell survival by phosphorylating the BCL2 antagonist of cell death BAD. Phosphorylates CTNND1, probably to regulate cytoskeletal organization and cell morphology. Keeps microtubules stable through MARK2 inhibition and destabilizes the F-actin network leading to the disappearance of stress fibers and focal adhesions. This is Serine/threonine-protein kinase PAK 5 (Pak5) from Rattus norvegicus (Rat).